We begin with the raw amino-acid sequence, 234 residues long: MPTYIKRHLRSLAVPRTWPVPRKSRGYWIVKPSPGPHSKEFAMPIAVWLRDYLGLAENMREVRYLLNNGKVLVDGRPIKDYKFPVGLFDVLAIPEINEYYRVLLDERGKLYLKKIDKEEANIKYGKIIRKVSVRGGKIQYTLTDGRTFLGDNSYKTHYGVVYEIPNFKIREVIPLEKDRKAYIIRGKHTGRIGVIKEVIKTDMPWPNIVRLEVAGEVGETWLDNIIPVPENFEA.

In terms of domain architecture, S4 RNA-binding spans 43-106 (MPIAVWLRDY…NEYYRVLLDE (64 aa)).

The protein belongs to the eukaryotic ribosomal protein eS4 family.

The sequence is that of Small ribosomal subunit protein eS4 from Nanoarchaeum equitans (strain Kin4-M).